A 172-amino-acid polypeptide reads, in one-letter code: SsrA-binding protein (172 aa).

Belongs to the SmpB family.

The protein resides in the cytoplasm. Functionally, required for rescue of stalled ribosomes mediated by trans-translation. Binds to transfer-messenger RNA (tmRNA), required for stable association of tmRNA with ribosomes. tmRNA and SmpB together mimic tRNA shape, replacing the anticodon stem-loop with SmpB. tmRNA is encoded by the ssrA gene; the 2 termini fold to resemble tRNA(Ala) and it encodes a 'tag peptide', a short internal open reading frame. During trans-translation Ala-aminoacylated tmRNA acts like a tRNA, entering the A-site of stalled ribosomes, displacing the stalled mRNA. The ribosome then switches to translate the ORF on the tmRNA; the nascent peptide is terminated with the 'tag peptide' encoded by the tmRNA and targeted for degradation. The ribosome is freed to recommence translation, which seems to be the essential function of trans-translation. This chain is SsrA-binding protein, found in Dehalococcoides mccartyi (strain CBDB1).